The primary structure comprises 205 residues: Transcriptional regulator GfcR (205 aa).

It belongs to the purine/pyrimidine phosphoribosyltransferase family. GfcR subfamily.

The sequence is that of Transcriptional regulator GfcR from Methanococcus maripaludis (strain C5 / ATCC BAA-1333).